Consider the following 126-residue polypeptide: Large ribosomal subunit protein bL12 (126 aa).

The protein belongs to the bacterial ribosomal protein bL12 family. As to quaternary structure, homodimer. Part of the ribosomal stalk of the 50S ribosomal subunit. Forms a multimeric L10(L12)X complex, where L10 forms an elongated spine to which 2 to 4 L12 dimers bind in a sequential fashion. Binds GTP-bound translation factors.

Functionally, forms part of the ribosomal stalk which helps the ribosome interact with GTP-bound translation factors. Is thus essential for accurate translation. The sequence is that of Large ribosomal subunit protein bL12 from Chlorobaculum parvum (strain DSM 263 / NCIMB 8327) (Chlorobium vibrioforme subsp. thiosulfatophilum).